Consider the following 321-residue polypeptide: Olfactory receptor 3A2 (321 aa).

Residues 1–35 (MSLQKLMEPEAGTNRTAVAEFILLGLVQTEEMQPV) are Extracellular-facing. The N-linked (GlcNAc...) asparagine glycan is linked to Asn14. A helical membrane pass occupies residues 36 to 58 (VFVLLLFAYLVTTGGNLSILAAV). Over 59 to 66 (LVEPKLHA) the chain is Cytoplasmic. The helical transmembrane segment at 67 to 88 (PMYFFLGNLSVLDVGCITVTVP) threads the bilayer. Over 89-109 (AMLGRLLSHKSTISYDACLSQ) the chain is Extracellular. Cys106 and Cys198 are joined by a disulfide. Residues 110–129 (LFFFHLLAGMDCFLLTAMAY) form a helical membrane-spanning segment. Over 130 to 149 (DRLLAICQPLTYSTRMSQTV) the chain is Cytoplasmic. A helical membrane pass occupies residues 150-167 (QRMLVAASLACAFTNALT). The Extracellular portion of the chain corresponds to 168-205 (HTVAMSTLNFCGPNEVNHFYCDLPQLFQLSCSSTQLNE). Residues 206 to 229 (LLLFAVGFIMAGTPLVLIITAYSH) form a helical membrane-spanning segment. Residues 230–246 (VAAAVLRIRSVEGRKKA) lie on the Cytoplasmic side of the membrane. The chain crosses the membrane as a helical span at residues 247–270 (FSTCGSHLTVVCLFFGRGIFNYMR). The Extracellular segment spans residues 271 to 281 (LGSEEASDKDK). The helical transmembrane segment at 282 to 301 (GVGVFNTVINPMLNPLIYSL) threads the bilayer. At 302–321 (RNPDVQGALWQIFLGRRSLT) the chain is on the cytoplasmic side.

Belongs to the G-protein coupled receptor 1 family.

The protein localises to the cell membrane. Its function is as follows. Odorant receptor. In Homo sapiens (Human), this protein is Olfactory receptor 3A2 (OR3A2).